Here is a 150-residue protein sequence, read N- to C-terminus: Macrodomain Ter protein (150 aa).

This sequence belongs to the MatP family. In terms of assembly, homodimer.

It localises to the cytoplasm. Required for spatial organization of the terminus region of the chromosome (Ter macrodomain) during the cell cycle. Prevents early segregation of duplicated Ter macrodomains during cell division. Binds specifically to matS, which is a 13 bp signature motif repeated within the Ter macrodomain. This chain is Macrodomain Ter protein, found in Escherichia coli O6:K15:H31 (strain 536 / UPEC).